Reading from the N-terminus, the 376-residue chain is Cytochrome b (376 aa).

4 helical membrane passes run 28-48 (YGFLLGIIFFIQILTGVFLAS), 72-94 (WCFRYMHATGASLVFFLTYLHIL), 107-127 (SWISGLIIFALFIVTAFIGYV), and 169-189 (FFVLHFILPFVALCIVFIHIF). Heme b contacts are provided by His-78 and His-92. Heme b is bound by residues His-173 and His-187. Residue His-192 coordinates a ubiquinone. 4 helical membrane passes run 214 to 234 (LLSLDVKGFNNILILFLIQSI), 274 to 294 (IPSKNAGLVIVVASLQLLFLL), 317 to 337 (VPIIWFMCSFYALLWIGCQLP), and 340 to 360 (IFILYGRLFIILFFSSGLFAL).

Belongs to the cytochrome b family. In terms of assembly, the main subunits of complex b-c1 are: cytochrome b, cytochrome c1 and the Rieske protein. Heme b is required as a cofactor.

Its subcellular location is the mitochondrion inner membrane. Its function is as follows. Component of the ubiquinol-cytochrome c reductase complex (complex III or cytochrome b-c1 complex) that is part of the mitochondrial respiratory chain. The b-c1 complex mediates electron transfer from ubiquinol to cytochrome c. Contributes to the generation of a proton gradient across the mitochondrial membrane that is then used for ATP synthesis. In Plasmodium chabaudi, this protein is Cytochrome b (MT-CYB).